Reading from the N-terminus, the 604-residue chain is Glutamine--fructose-6-phosphate aminotransferase [isomerizing] (604 aa).

Residue C2 is the Nucleophile; for GATase activity of the active site. The Glutamine amidotransferase type-2 domain maps to 2–218 (CGIVGVVGNT…DKELVIVKKD (217 aa)). SIS domains are found at residues 284-423 (IIKS…ANGK) and 456-594 (VEQL…VDKP). K599 (for Fru-6P isomerization activity) is an active-site residue.

Homodimer.

It is found in the cytoplasm. It catalyses the reaction D-fructose 6-phosphate + L-glutamine = D-glucosamine 6-phosphate + L-glutamate. Its function is as follows. Catalyzes the first step in hexosamine metabolism, converting fructose-6P into glucosamine-6P using glutamine as a nitrogen source. This chain is Glutamine--fructose-6-phosphate aminotransferase [isomerizing], found in Streptococcus agalactiae serotype V (strain ATCC BAA-611 / 2603 V/R).